A 664-amino-acid chain; its full sequence is DCC-interacting protein 13-beta (664 aa).

The segment at 1-428 (MPAVDKLLLE…NSEMENENDK (428 aa)) is required for RAB5A binding. One can recognise a BAR domain in the interval 3-268 (AVDKLLLEEA…ESVYTPDSDV (266 aa)). Positions 277–375 (LIQKAGYLNL…WICAINNISR (99 aa)) constitute a PH domain. In terms of domain architecture, PID spans 488 to 637 (SLLQQMFIVR…LMLSIPLTND (150 aa)). Positions 643–664 (LNDQPDDDDGNPNEHRGAESEA) are disordered. Residues 654 to 664 (PNEHRGAESEA) are compositionally biased toward basic and acidic residues.

Homodimer. Homotetramer. Binds RAB5A/Rab5 through an N-terminal domain. This interaction is essential for its recruitment to endosomal membranes as well as its role in cell proliferation. Binds subunits of the NuRD/MeCP1 complex. Interacts with FSHR; interaction is independent of follicle stimulating hormone stimulation. Interacts with APPL1; the interaction is decreased by adiponectin in a time-dependent manner. Forms a complex comprising APPL1, RUVBL2, CTNNB1, HDAC1 and HDAC2; interaction reduces interaction between CTNNB1, HDAC1, HDAC2 and RUVBL2 leading to the decrease of deacetylase activity of this complex; affects the recruitment of repressive complexes to the Wnt target genes. Interacts (via BAR domain) with TBC1D1; interaction is dependent of TBC1D1 phosphorylation at 'Ser-235'; interaction diminishes the phosphorylation of TBC1D1 at 'Thr-596', resulting in inhibition of SLC2A4 translocation and glucose uptake. Interacts with ANXA2; targets APPL2 to endosomes and acting in parallel to RAB5A. Interacts with RAB31 (in GTP-bound form); interaction contributes to or enhances recruitment of APPL2 to the phagosomes; interaction enhances Fc-gamma receptor-mediated phagocytosis through PI3K/Akt signaling in macrophages. Interacts with PIK3R1; forms a complex with PIK3R1 and APPL1. Interacts (via BAR domain) with ADIPOR1; hinders the accessibility of APPL1 to ADIPOR1; negatively regulates adiponectin signaling; ADIPOQ dissociates this interaction and facilitates the recruitment of APPL1 to ADIPOR1. Interacts (via BAR domain) with ADIPOR2; ADIPOQ dissociates this interaction. As to expression, high levels in brain, heart, kidney and skeletal muscle.

It is found in the early endosome membrane. It localises to the nucleus. The protein localises to the cell membrane. Its subcellular location is the endosome membrane. The protein resides in the cytoplasm. It is found in the cytoplasmic vesicle. It localises to the phagosome. The protein localises to the cell projection. Its subcellular location is the ruffle. The protein resides in the ruffle membrane. It is found in the phagosome membrane. Its function is as follows. Multifunctional adapter protein that binds to various membrane receptors, nuclear factors and signaling proteins to regulate many processes, such as cell proliferation, immune response, endosomal trafficking and cell metabolism. Regulates signaling pathway leading to cell proliferation through interaction with RAB5A and subunits of the NuRD/MeCP1 complex. Plays a role in immune response by modulating phagocytosis, inflammatory and innate immune responses. In macrophages, enhances Fc-gamma receptor-mediated phagocytosis through interaction with RAB31 leading to activation of PI3K/Akt signaling. In response to LPS, modulates inflammatory responses by playing a key role on the regulation of TLR4 signaling and in the nuclear translocation of RELA/NF-kappa-B p65 and the secretion of pro- and anti-inflammatory cytokines. Also functions as a negative regulator of innate immune response via inhibition of AKT1 signaling pathway by forming a complex with APPL1 and PIK3R1. Plays a role in endosomal trafficking of TGFBR1 from the endosomes to the nucleus. Plays a role in cell metabolism by regulating adiponecting ans insulin signaling pathways and adaptative thermogenesis. In muscle, negatively regulates adiponectin-simulated glucose uptake and fatty acid oxidation by inhibiting adiponectin signaling pathway through APPL1 sequestration thereby antagonizing APPL1 action. In muscles, negatively regulates insulin-induced plasma membrane recruitment of GLUT4 and glucose uptake through interaction with TBC1D1. Plays a role in cold and diet-induced adaptive thermogenesis by activating ventromedial hypothalamus (VMH) neurons throught AMPK inhibition which enhances sympathetic outflow to subcutaneous white adipose tissue (sWAT), sWAT beiging and cold tolerance. Also plays a role in other signaling pathways namely Wnt/beta-catenin, HGF and glucocorticoid receptor signaling. Positive regulator of beta-catenin/TCF-dependent transcription through direct interaction with RUVBL2/reptin resulting in the relief of RUVBL2-mediated repression of beta-catenin/TCF target genes by modulating the interactions within the beta-catenin-reptin-HDAC complex. May affect adult neurogenesis in hippocampus and olfactory system via regulating the sensitivity of glucocorticoid receptor. Required for fibroblast migration through HGF cell signaling. This Homo sapiens (Human) protein is DCC-interacting protein 13-beta.